Consider the following 161-residue polypeptide: Protein YzcX (161 aa).

The chain is Protein YzcX (yzcX) from Escherichia coli (strain K12).